Reading from the N-terminus, the 1159-residue chain is Ferroxidase HEPHL1 (1159 aa).

Residues 1-24 form the signal peptide; that stretch reads MPRKQPAGCIFLLTFLGLSGLVGT. 6 Plastocyanin-like domains span residues 25–207, 218–366, 379–561, 571–719, 731–907, and 915–1092; these read VTRT…LLVC, TRND…VDNC, QRRY…LLVC, TQKG…VSSC, MIRT…LITC, and KGRR…VPSN. Residues 25-1114 are Extracellular-facing; it reads VTRTYYIGIV…KNLGPTGAKA (1090 aa). Residues H127 and H129 each coordinate Cu cation. The N-linked (GlcNAc...) asparagine glycan is linked to N161. C181 and C207 are oxidised to a cystine. Cu cation is bound by residues H187 and H189. N-linked (GlcNAc...) asparagine glycosylation is present at N236. C285 and C366 are oxidised to a cystine. The Cu cation site is built by H304, C347, and H352. A glycan (N-linked (GlcNAc...) asparagine) is linked at N407. A disulfide bond links C535 and C561. A glycan (N-linked (GlcNAc...) asparagine) is linked at N589. C638 and C719 are disulfide-bonded. Residues H657, C700, H705, and M710 each contribute to the Cu cation site. N-linked (GlcNAc...) asparagine glycosylation occurs at N772. Cysteines 881 and 907 form a disulfide. N935 carries an N-linked (GlcNAc...) asparagine glycan. Positions 1003, 1006, 1008, 1048, 1049, 1050, 1054, and 1059 each coordinate Cu cation. The helical transmembrane segment at 1115-1135 threads the bilayer; the sequence is ALVILFIIGLLLLITTVILSL. Topologically, residues 1136–1159 are cytoplasmic; it reads RLCSAMKQTDYQQVQSCALPTDAL.

Belongs to the multicopper oxidase family. It depends on Cu cation as a cofactor.

It is found in the membrane. The enzyme catalyses 4 Fe(2+) + O2 + 4 H(+) = 4 Fe(3+) + 2 H2O. In terms of biological role, is a copper-binding glycoprotein with ferroxidase activity. It oxidizes Fe(2+) to Fe(3+) without releasing radical oxygen species. May be involved in the regulation of intracellular iron content. This chain is Ferroxidase HEPHL1 (HEPHL1), found in Homo sapiens (Human).